A 798-amino-acid polypeptide reads, in one-letter code: Phenylalanine--tRNA ligase beta subunit (798 aa).

In terms of domain architecture, tRNA-binding spans 39–147 (AARLAGFTLA…PSGEVGERFI (109 aa)). In terms of domain architecture, B5 spans 404-475 (DHSRAYKLDA…RIASLTKLVG (72 aa)). Residues D453, D459, E462, and E463 each contribute to the Mg(2+) site. The FDX-ACB domain maps to 704-797 (RDLQAVERDF…VAKATGGTLR (94 aa)).

This sequence belongs to the phenylalanyl-tRNA synthetase beta subunit family. Type 1 subfamily. In terms of assembly, tetramer of two alpha and two beta subunits. Requires Mg(2+) as cofactor.

The protein resides in the cytoplasm. The catalysed reaction is tRNA(Phe) + L-phenylalanine + ATP = L-phenylalanyl-tRNA(Phe) + AMP + diphosphate + H(+). The chain is Phenylalanine--tRNA ligase beta subunit from Ruegeria pomeroyi (strain ATCC 700808 / DSM 15171 / DSS-3) (Silicibacter pomeroyi).